The sequence spans 312 residues: tRNA dimethylallyltransferase (312 aa).

An ATP-binding site is contributed by 11–18; it reads GATATGKT. 13 to 18 provides a ligand contact to substrate; it reads TATGKT. Positions 36 to 39 are interaction with substrate tRNA; it reads DSRQ.

It belongs to the IPP transferase family. As to quaternary structure, monomer. Mg(2+) is required as a cofactor.

It carries out the reaction adenosine(37) in tRNA + dimethylallyl diphosphate = N(6)-dimethylallyladenosine(37) in tRNA + diphosphate. Functionally, catalyzes the transfer of a dimethylallyl group onto the adenine at position 37 in tRNAs that read codons beginning with uridine, leading to the formation of N6-(dimethylallyl)adenosine (i(6)A). The sequence is that of tRNA dimethylallyltransferase from Thermosynechococcus vestitus (strain NIES-2133 / IAM M-273 / BP-1).